A 364-amino-acid chain; its full sequence is Caffeic acid 3-O-methyltransferase 2 (364 aa).

Position 129–135 (129–135 (MNQDKVL)) interacts with substrate. The substrate binding stretch occupies residues 161–179 (AFEYHGTDPRFNKVFNKGM). G207, D230, D250, M251, and K264 together coordinate S-adenosyl-L-methionine. The active-site Proton acceptor is the H268.

This sequence belongs to the class I-like SAM-binding methyltransferase superfamily. Cation-independent O-methyltransferase family. COMT subfamily. Homodimer.

It catalyses the reaction (E)-caffeate + S-adenosyl-L-methionine = (E)-ferulate + S-adenosyl-L-homocysteine + H(+). It participates in aromatic compound metabolism; phenylpropanoid biosynthesis. Catalyzes the conversion of caffeic acid to ferulic acid and of 5-hydroxyferulic acid to sinapic acid. The resulting products may subsequently be converted to the corresponding alcohols that are incorporated into lignins. The protein is Caffeic acid 3-O-methyltransferase 2 (OMT2) of Populus tremuloides (Quaking aspen).